The primary structure comprises 319 residues: Glutathione synthetase (319 aa).

In terms of domain architecture, ATP-grasp spans 125-311 (KLFTAWFPEL…ITGMLMDAIE (187 aa)). 151-207 (HQEHGDIILKPLDGMGGTSIFRVKQDDPNLSVIIETLTELSSRFCMAQNFLPAIKEG) serves as a coordination point for ATP. The Mg(2+) site is built by Glu281 and Asn283.

This sequence belongs to the prokaryotic GSH synthase family. The cofactor is Mg(2+). Mn(2+) serves as cofactor.

The enzyme catalyses gamma-L-glutamyl-L-cysteine + glycine + ATP = glutathione + ADP + phosphate + H(+). The protein operates within sulfur metabolism; glutathione biosynthesis; glutathione from L-cysteine and L-glutamate: step 2/2. This chain is Glutathione synthetase, found in Yersinia pestis.